A 376-amino-acid polypeptide reads, in one-letter code: Spermidine/putrescine import ATP-binding protein PotA (376 aa).

Residues 6 to 236 (INIVNVNKSF…PADTFVADFL (231 aa)) enclose the ABC transporter domain. Residue 38–45 (GPSGCGKT) coordinates ATP.

It belongs to the ABC transporter superfamily. Spermidine/putrescine importer (TC 3.A.1.11.1) family. The complex is composed of two ATP-binding proteins (PotA), two transmembrane proteins (PotB and PotC) and a solute-binding protein (PotD).

The protein resides in the cell inner membrane. The catalysed reaction is ATP + H2O + polyamine-[polyamine-binding protein]Side 1 = ADP + phosphate + polyamineSide 2 + [polyamine-binding protein]Side 1.. Its function is as follows. Part of the ABC transporter complex PotABCD involved in spermidine/putrescine import. Responsible for energy coupling to the transport system. This Fusobacterium nucleatum subsp. nucleatum (strain ATCC 25586 / DSM 15643 / BCRC 10681 / CIP 101130 / JCM 8532 / KCTC 2640 / LMG 13131 / VPI 4355) protein is Spermidine/putrescine import ATP-binding protein PotA.